The chain runs to 111 residues: Urease subunit beta (111 aa).

It belongs to the urease beta subunit family. In terms of assembly, heterotrimer of UreA (gamma), UreB (beta) and UreC (alpha) subunits. Three heterotrimers associate to form the active enzyme.

The protein resides in the cytoplasm. It catalyses the reaction urea + 2 H2O + H(+) = hydrogencarbonate + 2 NH4(+). It participates in nitrogen metabolism; urea degradation; CO(2) and NH(3) from urea (urease route): step 1/1. The polypeptide is Urease subunit beta (Geobacillus kaustophilus (strain HTA426)).